The primary structure comprises 255 residues: Imidazole glycerol phosphate synthase subunit HisF (255 aa).

Residues D11 and D130 contribute to the active site.

The protein belongs to the HisA/HisF family. In terms of assembly, heterodimer of HisH and HisF.

Its subcellular location is the cytoplasm. It catalyses the reaction 5-[(5-phospho-1-deoxy-D-ribulos-1-ylimino)methylamino]-1-(5-phospho-beta-D-ribosyl)imidazole-4-carboxamide + L-glutamine = D-erythro-1-(imidazol-4-yl)glycerol 3-phosphate + 5-amino-1-(5-phospho-beta-D-ribosyl)imidazole-4-carboxamide + L-glutamate + H(+). It functions in the pathway amino-acid biosynthesis; L-histidine biosynthesis; L-histidine from 5-phospho-alpha-D-ribose 1-diphosphate: step 5/9. IGPS catalyzes the conversion of PRFAR and glutamine to IGP, AICAR and glutamate. The HisF subunit catalyzes the cyclization activity that produces IGP and AICAR from PRFAR using the ammonia provided by the HisH subunit. The chain is Imidazole glycerol phosphate synthase subunit HisF from Rhodopseudomonas palustris (strain BisA53).